A 461-amino-acid chain; its full sequence is Piperine synthase (461 aa).

Active-site proton acceptor residues include His168 and Asp387. Residues 459-461 (SRM) carry the Microbody targeting signal motif.

The protein belongs to the plant acyltransferase family. In terms of assembly, monomer. As to expression, confined to immature fruits perisperm. Also detectable in roots.

It localises to the cytoplasm. It carries out the reaction piperidine + (E,E)-piperoyl-CoA = piperine + CoA + H(+). It catalyses the reaction pyrrolidine + (E,E)-piperoyl-CoA = piperyline + CoA + H(+). The catalysed reaction is (E,E)-piperoyl-CoA + 2-methylpropan-1-amine = (E,E)-piperlonguminine + CoA + H(+). Its pathway is aromatic compound metabolism. Involved in the biosynthesis of aromatic piperamides natural products such as piperine (1-piperoyl-piperidine), the pungent principle contributing, together with several terpenoids, to the aromatic properties of black pepper fruits, and displaying numerous pharmacological activities such as antiproliferative, antitumor, antiangiogenesis, antioxidant, antidiabetic, antiobesity, cardioprotective, antimicrobial, antiaging, and immunomodulatory effects. Mediates mainly the conversion of piperidine and piperoyl-CoA to piperine. Can also use pyrrolidine and isobutylamine as acceptors and 3,4-methylenedioxycinnamoyl-CoA as an alternative CoA-donor with a lower efficiency. This Piper nigrum (Black pepper) protein is Piperine synthase.